The sequence spans 336 residues: Mediator of RNA polymerase II transcription subunit 4 (336 aa).

Disordered stretches follow at residues 1–45 (MNST…SNVV) and 59–85 (NVEE…QDEA). Residues 154-192 (QQAAQTIAALERVSEGLDDKIRDMIRKLAECRRELRNYQ) adopt a coiled-coil conformation. The tract at residues 281–336 (PVANGVAQNHNNGYAMERRLSTGYGSDNDGDTNMNGRSGLAGLDIFDDDDDDDDDD) is disordered. A compositionally biased stretch (acidic residues) spans 325–336 (IFDDDDDDDDDD).

It belongs to the Mediator complex subunit 4 family. In terms of assembly, component of the Mediator complex.

It is found in the nucleus. Its function is as follows. Component of the Mediator complex, a coactivator involved in the regulated transcription of nearly all RNA polymerase II-dependent genes. Mediator functions as a bridge to convey information from gene-specific regulatory proteins to the basal RNA polymerase II transcription machinery. Mediator is recruited to promoters by direct interactions with regulatory proteins and serves as a scaffold for the assembly of a functional preinitiation complex with RNA polymerase II and the general transcription factors. The sequence is that of Mediator of RNA polymerase II transcription subunit 4 (MED4) from Yarrowia lipolytica (strain CLIB 122 / E 150) (Yeast).